The following is a 316-amino-acid chain: Heme oxygenase 2 (316 aa).

Acidic residues predominate over residues 1 to 12; it reads MSAEVETSEGVD. Positions 1-29 are disordered; sequence MSAEVETSEGVDESEKKNSGALEKENQMR. At Ser2 the chain carries N-acetylserine. Ser2 bears the Phosphoserine mark. Basic and acidic residues predominate over residues 13–27; the sequence is ESEKKNSGALEKENQ. His45 lines the heme b pocket. HRM repeat units follow at residues 264 to 269 and 281 to 286; these read KCPFYA and SCPFRT. 2 positions are modified to S-nitrosocysteine: Cys265 and Cys282.

It belongs to the heme oxygenase family. Post-translationally, S-nitrosylated by BLVRB.

It is found in the microsome. It localises to the endoplasmic reticulum. It carries out the reaction heme b + 3 reduced [NADPH--hemoprotein reductase] + 3 O2 = biliverdin IXalpha + CO + Fe(2+) + 3 oxidized [NADPH--hemoprotein reductase] + 3 H2O + H(+). Heme oxygenase cleaves the heme ring at the alpha methene bridge to form biliverdin. Biliverdin is subsequently converted to bilirubin by biliverdin reductase. Under physiological conditions, the activity of heme oxygenase is highest in the spleen, where senescent erythrocytes are sequestrated and destroyed. Heme oxygenase 2 could be implicated in the production of carbon monoxide in brain where it could act as a neurotransmitter. This is Heme oxygenase 2 (HMOX2) from Macaca fascicularis (Crab-eating macaque).